We begin with the raw amino-acid sequence, 233 residues long: 2,3,4,5-tetrahydropyridine-2,6-dicarboxylate N-acetyltransferase (233 aa).

This sequence belongs to the transferase hexapeptide repeat family. DapH subfamily.

It catalyses the reaction (S)-2,3,4,5-tetrahydrodipicolinate + acetyl-CoA + H2O = L-2-acetamido-6-oxoheptanedioate + CoA. It participates in amino-acid biosynthesis; L-lysine biosynthesis via DAP pathway; LL-2,6-diaminopimelate from (S)-tetrahydrodipicolinate (acetylase route): step 1/3. Its function is as follows. Catalyzes the transfer of an acetyl group from acetyl-CoA to tetrahydrodipicolinate. In Leuconostoc mesenteroides subsp. mesenteroides (strain ATCC 8293 / DSM 20343 / BCRC 11652 / CCM 1803 / JCM 6124 / NCDO 523 / NBRC 100496 / NCIMB 8023 / NCTC 12954 / NRRL B-1118 / 37Y), this protein is 2,3,4,5-tetrahydropyridine-2,6-dicarboxylate N-acetyltransferase.